A 353-amino-acid polypeptide reads, in one-letter code: Pleckstrin-2 (353 aa).

At M1 the chain carries N-acetylmethionine. In terms of domain architecture, PH 1 spans 4–104; it reads GVLKEGFLVK…WAFEITGAIH (101 aa). S120 is modified (phosphoserine). The region spanning 139 to 225 is the DEP domain; sequence SNTGIRSSPN…DSTALYTFAE (87 aa). In terms of domain architecture, PH 2 spans 247–353; the sequence is TVVKQGYLAK…EWIEAIKKLT (107 aa).

It is found in the cell projection. The protein localises to the lamellipodium membrane. Its subcellular location is the cytoplasm. It localises to the cytoskeleton. Its function is as follows. May help orchestrate cytoskeletal arrangement. Contribute to lamellipodia formation. The chain is Pleckstrin-2 (PLEK2) from Homo sapiens (Human).